The sequence spans 180 residues: Ribosome rescue factor SmrB (180 aa).

The 76-residue stretch at 98 to 173 (LDLHGLTQLI…GDAALLLLVE (76 aa)) folds into the Smr domain.

Belongs to the SmrB family. As to quaternary structure, associates with collided ribosomes, but not with correctly translating polysomes.

Its function is as follows. Acts as a ribosome collision sensor. Detects stalled/collided disomes (pairs of ribosomes where the leading ribosome is stalled and a second ribosome has collided with it) and endonucleolytically cleaves mRNA at the 5' boundary of the stalled ribosome. Stalled/collided disomes form a new interface (primarily via the 30S subunits) that binds SmrB. Cleaved mRNA becomes available for tmRNA ligation, leading to ribosomal subunit dissociation and rescue of stalled ribosomes. This Proteus mirabilis (strain HI4320) protein is Ribosome rescue factor SmrB.